A 346-amino-acid chain; its full sequence is Phosphoribosylformylglycinamidine cyclo-ligase (346 aa).

Belongs to the AIR synthase family.

It is found in the cytoplasm. The enzyme catalyses 2-formamido-N(1)-(5-O-phospho-beta-D-ribosyl)acetamidine + ATP = 5-amino-1-(5-phospho-beta-D-ribosyl)imidazole + ADP + phosphate + H(+). It participates in purine metabolism; IMP biosynthesis via de novo pathway; 5-amino-1-(5-phospho-D-ribosyl)imidazole from N(2)-formyl-N(1)-(5-phospho-D-ribosyl)glycinamide: step 2/2. In Bacillus licheniformis (strain ATCC 14580 / DSM 13 / JCM 2505 / CCUG 7422 / NBRC 12200 / NCIMB 9375 / NCTC 10341 / NRRL NRS-1264 / Gibson 46), this protein is Phosphoribosylformylglycinamidine cyclo-ligase.